A 442-amino-acid chain; its full sequence is 4-hydroxyphenylpyruvate dioxygenase (442 aa).

VOC domains are found at residues 45–200 (RFHH…GFEA) and 216–376 (RLDH…IFTK). The Fe cation site is built by His-219, His-301, and Glu-387.

This sequence belongs to the 4HPPD family. Fe cation serves as cofactor.

It is found in the cytoplasm. The enzyme catalyses 3-(4-hydroxyphenyl)pyruvate + O2 = homogentisate + CO2. It functions in the pathway amino-acid degradation; L-phenylalanine degradation; acetoacetate and fumarate from L-phenylalanine: step 3/6. The protein operates within cofactor biosynthesis; prenylquinone biosynthesis. This Daucus carota (Wild carrot) protein is 4-hydroxyphenylpyruvate dioxygenase.